The chain runs to 274 residues: MDWFYAIIYGIVEGITEFLPISSTGHLIVAGNLMGVPWSKEIRDTFEVVIQGGAILAVLAYYWRDFAGQARVIGHDRPTQRLWLGVIVGVIPAVVLGVLFGDVIKAHLFRPSVVAWALIVGGVLMWVIENRKAPPVVHDLKQIGLGRAFLIGAAQCLALLWPGFSRSASSILGGMVMGLDRPTATRFSFYLGIPTLGGAALLDFIKSRHLLAEIGLLNVFLGAAVSFVVAYLAIGWLLRFVSQHNFKGFAVYRVIFGLLILLLVASGRLANGGL.

8 helical membrane passes run 1-21 (MDWF…FLPI), 48-68 (VVIQ…DFAG), 84-104 (LGVI…GDVI), 108-128 (LFRP…MWVI), 143-163 (IGLG…LWPG), 187-207 (FSFY…FIKS), 214-234 (IGLL…YLAI), and 254-274 (VIFG…NGGL).

It belongs to the UppP family.

It is found in the cell membrane. The enzyme catalyses di-trans,octa-cis-undecaprenyl diphosphate + H2O = di-trans,octa-cis-undecaprenyl phosphate + phosphate + H(+). In terms of biological role, catalyzes the dephosphorylation of undecaprenyl diphosphate (UPP). Confers resistance to bacitracin. The chain is Undecaprenyl-diphosphatase from Deinococcus geothermalis (strain DSM 11300 / CIP 105573 / AG-3a).